The following is a 1433-amino-acid chain: DNA-directed RNA polymerase subunit beta' (1433 aa).

Zn(2+)-binding residues include Cys-66, Cys-68, Cys-81, and Cys-84. Positions 474, 476, and 478 each coordinate Mg(2+). Cys-823, Cys-897, Cys-904, and Cys-907 together coordinate Zn(2+).

This sequence belongs to the RNA polymerase beta' chain family. The RNAP catalytic core consists of 2 alpha, 1 beta, 1 beta' and 1 omega subunit. When a sigma factor is associated with the core the holoenzyme is formed, which can initiate transcription. Mg(2+) is required as a cofactor. It depends on Zn(2+) as a cofactor.

The enzyme catalyses RNA(n) + a ribonucleoside 5'-triphosphate = RNA(n+1) + diphosphate. Its function is as follows. DNA-dependent RNA polymerase catalyzes the transcription of DNA into RNA using the four ribonucleoside triphosphates as substrates. The polypeptide is DNA-directed RNA polymerase subunit beta' (Amoebophilus asiaticus (strain 5a2)).